Reading from the N-terminus, the 378-residue chain is Glutamate 5-kinase (378 aa).

Residue lysine 17 participates in ATP binding. Substrate-binding residues include serine 58, aspartate 145, and asparagine 157. ATP contacts are provided by residues 177 to 178 and 221 to 227; these read TD and TGGMMTK. The 79-residue stretch at 286-364 folds into the PUA domain; that stretch reads VGKLYLDSGA…KEIPTILGYV (79 aa).

This sequence belongs to the glutamate 5-kinase family.

Its subcellular location is the cytoplasm. The catalysed reaction is L-glutamate + ATP = L-glutamyl 5-phosphate + ADP. Its pathway is amino-acid biosynthesis; L-proline biosynthesis; L-glutamate 5-semialdehyde from L-glutamate: step 1/2. Its function is as follows. Catalyzes the transfer of a phosphate group to glutamate to form L-glutamate 5-phosphate. This chain is Glutamate 5-kinase, found in Nostoc sp. (strain PCC 7120 / SAG 25.82 / UTEX 2576).